The primary structure comprises 476 residues: Ribulose bisphosphate carboxylase large chain (476 aa).

Residues Asn124 and Thr174 each coordinate substrate. Lys176 (proton acceptor) is an active-site residue. Lys178 is a binding site for substrate. The Mg(2+) site is built by Lys202, Asp204, and Glu205. N6-carboxylysine is present on Lys202. Residue His295 is the Proton acceptor of the active site. Residues Arg296, His328, and Ser380 each contribute to the substrate site.

It belongs to the RuBisCO large chain family. Type I subfamily. Heterohexadecamer of 8 large chains and 8 small chains; disulfide-linked. The disulfide link is formed within the large subunit homodimers. Requires Mg(2+) as cofactor. In terms of processing, the disulfide bond which can form in the large chain dimeric partners within the hexadecamer appears to be associated with oxidative stress and protein turnover.

Its subcellular location is the carboxysome. The catalysed reaction is 2 (2R)-3-phosphoglycerate + 2 H(+) = D-ribulose 1,5-bisphosphate + CO2 + H2O. It catalyses the reaction D-ribulose 1,5-bisphosphate + O2 = 2-phosphoglycolate + (2R)-3-phosphoglycerate + 2 H(+). RuBisCO catalyzes two reactions: the carboxylation of D-ribulose 1,5-bisphosphate, the primary event in carbon dioxide fixation, as well as the oxidative fragmentation of the pentose substrate in the photorespiration process. Both reactions occur simultaneously and in competition at the same active site. This is Ribulose bisphosphate carboxylase large chain from Trichormus variabilis (strain ATCC 29413 / PCC 7937) (Anabaena variabilis).